The sequence spans 346 residues: Selenide, water dikinase (346 aa).

Sec-16 is an active-site residue. A non-standard amino acid (selenocysteine) is located at residue Sec-16. Residues Lys-19 and 47–49 (TAD) each bind ATP. Asp-50 provides a ligand contact to Mg(2+). Residues Asp-67, Asp-90, and 138–140 (GHS) contribute to the ATP site. Residue Asp-90 participates in Mg(2+) binding. Asp-226 contributes to the Mg(2+) binding site.

The protein belongs to the selenophosphate synthase 1 family. Class I subfamily. Homodimer. Requires Mg(2+) as cofactor.

The enzyme catalyses hydrogenselenide + ATP + H2O = selenophosphate + AMP + phosphate + 2 H(+). Functionally, synthesizes selenophosphate from selenide and ATP. The protein is Selenide, water dikinase of Haemophilus ducreyi (strain 35000HP / ATCC 700724).